The primary structure comprises 212 residues: Metalloproteinase inhibitor 3 (212 aa).

The first 24 residues, 1–24 (MTAWLGFLAVFLCSWSLRDLVAEA), serve as a signal peptide directing secretion. Zn(2+) is bound at residue cysteine 25. Involved in metalloproteinase-binding stretches follow at residues 25–28 (CTCV) and 89–90 (ES). Intrachain disulfides connect cysteine 25-cysteine 92, cysteine 27-cysteine 119, cysteine 37-cysteine 144, cysteine 146-cysteine 193, cysteine 151-cysteine 156, and cysteine 164-cysteine 185. One can recognise an NTR domain in the interval 25-144 (CTCVPIHPQD…GLNHRYHLGC (120 aa)).

Belongs to the protease inhibitor I35 (TIMP) family.

It is found in the secreted. The protein localises to the extracellular space. Its subcellular location is the extracellular matrix. Complexes with metalloproteinases (such as collagenases) and irreversibly inactivates them by binding to their catalytic zinc cofactor. May form part of a tissue-specific acute response to remodeling stimuli. The protein is Metalloproteinase inhibitor 3 (TIMP3) of Gallus gallus (Chicken).